A 199-amino-acid chain; its full sequence is dITP/XTP pyrophosphatase (199 aa).

12-17 serves as a coordination point for substrate; the sequence is SGNAGK. Catalysis depends on Asp-73, which acts as the Proton acceptor. Asp-73 is a Mg(2+) binding site. Residues Ser-74, 157–160, Lys-180, and 185–186 each bind substrate; these read FGYD and HR.

The protein belongs to the HAM1 NTPase family. In terms of assembly, homodimer. It depends on Mg(2+) as a cofactor.

It carries out the reaction XTP + H2O = XMP + diphosphate + H(+). The catalysed reaction is dITP + H2O = dIMP + diphosphate + H(+). It catalyses the reaction ITP + H2O = IMP + diphosphate + H(+). Functionally, pyrophosphatase that catalyzes the hydrolysis of nucleoside triphosphates to their monophosphate derivatives, with a high preference for the non-canonical purine nucleotides XTP (xanthosine triphosphate), dITP (deoxyinosine triphosphate) and ITP. Seems to function as a house-cleaning enzyme that removes non-canonical purine nucleotides from the nucleotide pool, thus preventing their incorporation into DNA/RNA and avoiding chromosomal lesions. In Neisseria meningitidis serogroup A / serotype 4A (strain DSM 15465 / Z2491), this protein is dITP/XTP pyrophosphatase.